Here is a 63-residue protein sequence, read N- to C-terminus: Large ribosomal subunit protein uL29 (63 aa).

This sequence belongs to the universal ribosomal protein uL29 family.

This Haemophilus influenzae (strain 86-028NP) protein is Large ribosomal subunit protein uL29.